We begin with the raw amino-acid sequence, 250 residues long: NH(3)-dependent NAD(+) synthetase (250 aa).

ATP is bound at residue 30-37 (GVSGGIDS). Residue D36 coordinates Mg(2+). R117 provides a ligand contact to deamido-NAD(+). T137 contacts ATP. E142 serves as a coordination point for Mg(2+). 2 residues coordinate deamido-NAD(+): K150 and D157. The ATP site is built by K166 and S188. A deamido-NAD(+)-binding site is contributed by 234–235 (HK).

Belongs to the NAD synthetase family. Homodimer.

It carries out the reaction deamido-NAD(+) + NH4(+) + ATP = AMP + diphosphate + NAD(+) + H(+). It participates in cofactor biosynthesis; NAD(+) biosynthesis; NAD(+) from deamido-NAD(+) (ammonia route): step 1/1. In terms of biological role, catalyzes the ATP-dependent amidation of deamido-NAD to form NAD. Uses ammonia as a nitrogen source. The polypeptide is NH(3)-dependent NAD(+) synthetase (Mannheimia succiniciproducens (strain KCTC 0769BP / MBEL55E)).